The primary structure comprises 958 residues: Translation initiation factor IF-2 (958 aa).

A compositionally biased stretch (low complexity) spans 50-67 (FKPAAAPKVEAKPAAPKV). Disordered regions lie at residues 50 to 224 (FKPA…RIDF) and 288 to 374 (EVVP…HELP). Composition is skewed to basic and acidic residues over residues 68 to 89 (SAEK…EEAK), 96 to 118 (SAEK…EAKP), and 138 to 153 (FKAE…AERR). The segment covering 157–169 (KGNNRDQQQNGNR) has biased composition (low complexity). Composition is skewed to basic and acidic residues over residues 185–195 (RDNRRFNDQAK) and 290–323 (VPEK…DGPR). The span at 337-346 (NQKNSNWNNN) shows a compositional bias: low complexity. Basic and acidic residues predominate over residues 365 to 374 (VTERKFHELP). Residues 460 to 627 (ERPPVVTIMG…TVLLVAEIQE (168 aa)) enclose the tr-type G domain. Positions 469-476 (GHVDHGKT) are G1. GTP is bound at residue 469 to 476 (GHVDHGKT). Residues 494–498 (GITQH) form a G2 region. A G3 region spans residues 515-518 (DTPG). GTP-binding positions include 515–519 (DTPGH) and 569–572 (NKID). The G4 stretch occupies residues 569 to 572 (NKID). Residues 605-607 (SAK) are G5.

The protein belongs to the TRAFAC class translation factor GTPase superfamily. Classic translation factor GTPase family. IF-2 subfamily.

Its subcellular location is the cytoplasm. In terms of biological role, one of the essential components for the initiation of protein synthesis. Protects formylmethionyl-tRNA from spontaneous hydrolysis and promotes its binding to the 30S ribosomal subunits. Also involved in the hydrolysis of GTP during the formation of the 70S ribosomal complex. In Streptococcus pneumoniae serotype 4 (strain ATCC BAA-334 / TIGR4), this protein is Translation initiation factor IF-2.